The sequence spans 1050 residues: Self-sufficient cytochrome P450 monooxygenase CYP505E5 (1050 aa).

Cysteine 405 serves as a coordination point for heme. Residues 467 to 491 (RRSMLVARDGSSGESSNHLAEARGD) form a disordered region. The Flavodoxin-like domain maps to 500–641 (VSFFYGSNSG…DLEAWEETSL (142 aa)). Residues 506-510 (SNSGT) and 585-617 (VFGC…TRLA) each bind FMN. Positions 679–907 (KGLIEAKVTA…RPAKESFHLP (229 aa)) constitute an FAD-binding FR-type domain.

This sequence in the N-terminal section; belongs to the cytochrome P450 family. It depends on FAD as a cofactor. FMN serves as cofactor. Heme is required as a cofactor.

It carries out the reaction 2 oxidized [cytochrome P450] + NADPH = 2 reduced [cytochrome P450] + NADP(+) + H(+). The enzyme catalyses an organic molecule + reduced [NADPH--hemoprotein reductase] + O2 = an alcohol + oxidized [NADPH--hemoprotein reductase] + H2O + H(+). It catalyses the reaction dodecanoate + reduced [NADPH--hemoprotein reductase] + O2 = 5-hydroxydodecanoate + oxidized [NADPH--hemoprotein reductase] + H2O + H(+). The catalysed reaction is tetradecanoate + reduced [NADPH--hemoprotein reductase] + O2 = 7-hydroxytetradecanoate + oxidized [NADPH--hemoprotein reductase] + H2O + H(+). It carries out the reaction dodecan-1-ol + reduced [NADPH--hemoprotein reductase] + O2 = 1,5-dodecanediol + oxidized [NADPH--hemoprotein reductase] + H2O + H(+). The enzyme catalyses dodecan-1-ol + reduced [NADPH--hemoprotein reductase] + O2 = 1,4-dodecanediol + oxidized [NADPH--hemoprotein reductase] + H2O + H(+). It catalyses the reaction dodecan-1-ol + reduced [NADPH--hemoprotein reductase] + O2 = 1,6-dodecanediol + oxidized [NADPH--hemoprotein reductase] + H2O + H(+). Functionally, self-sufficient cytochrome P450 monooxygenase that catalyzes the regioselective in-chain hydroxylation of alkanes, fatty alcohols, and fatty acids at the omega-7 position. Performs hydroxylation of C10-C16 n-alkanes and C12 and C14 fatty alcohols; and thereby enables the one step biocatalytic synthesis of rare alcohols such as 5-dodecanol and 7-tetradecanol. Converts 1-dodecanol into 1,5-dodecanediol as major product with very little sub-terminally hydroxylated products with the 1,4-dodecanediol and 1,6-dodecanediol more abundant. Converts dodecanoic acid to 5-hydroxydodecanoic acid which can be further converted into delta-dodecalactone by lactonization of the 5-hydroxy acid at low pH. Also gives sub-terminal hydroxylation of dodecanoic acid with 9-hydroxydodecanoic acid being the second most abundant product. This is Self-sufficient cytochrome P450 monooxygenase CYP505E5 from Aspergillus niger.